The following is a 346-amino-acid chain: Putative glycosyltransferase HI_0523 (346 aa).

It belongs to the glycosyltransferase 9 family.

This Haemophilus influenzae (strain ATCC 51907 / DSM 11121 / KW20 / Rd) protein is Putative glycosyltransferase HI_0523.